We begin with the raw amino-acid sequence, 314 residues long: uncharacterized protein (314 aa).

A signal peptide spans 1–18; the sequence is MKVSLLIFLIILVGVIKS. Residues asparagine 43, asparagine 96, asparagine 109, asparagine 116, asparagine 117, and asparagine 161 are each glycosylated (N-linked (GlcNAc...) asparagine). Residues 252 to 314 are disordered; that stretch reads SMRITKNNPH…PKSIDFHHLF (63 aa). 2 stretches are compositionally biased toward low complexity: residues 257–268 and 285–296; these read KNNPHLNNNNNN and KTTTKTSTKTTS.

The protein localises to the secreted. This is an uncharacterized protein from Dictyostelium discoideum (Social amoeba).